Consider the following 631-residue polypeptide: Leucine aminopeptidase 2-2 (631 aa).

Substrate contacts are provided by residues 140–142 (QCQ) and 265–270 (PYGGME). Position 294 (His-294) interacts with Zn(2+). Glu-295 functions as the Proton acceptor in the catalytic mechanism. Zn(2+) contacts are provided by His-298 and Glu-317. The Proton donor role is filled by Tyr-395.

The protein belongs to the peptidase M1 family. It depends on Zn(2+) as a cofactor.

It is found in the cytoplasm. The protein localises to the nucleus. It catalyses the reaction an epoxide + H2O = an ethanediol. In terms of biological role, aminopeptidase that preferentially cleaves di- and tripeptides. Also has low epoxide hydrolase activity (in vitro). Can hydrolyze the epoxide leukotriene LTA(4) but it forms preferentially 5,6-dihydroxy-7,9,11,14-eicosatetraenoic acid rather than the cytokine leukotriene B(4) as the product compared to the homologous mammalian enzyme (in vitro). This chain is Leucine aminopeptidase 2-2, found in Meyerozyma guilliermondii (strain ATCC 6260 / CBS 566 / DSM 6381 / JCM 1539 / NBRC 10279 / NRRL Y-324) (Yeast).